We begin with the raw amino-acid sequence, 227 residues long: Germin-like protein subfamily 1 member 6 (227 aa).

The N-terminal stretch at 1-25 is a signal peptide; that stretch reads MMEVLLRLLVTQVILLALATSFVSC. Cysteine 35 and cysteine 51 are disulfide-bonded. One can recognise a Cupin type-1 domain in the interval 65 to 216; sequence SGLNIARNTT…AFQLDVKLVR (152 aa). N-linked (GlcNAc...) asparagine glycosylation is found at asparagine 72 and asparagine 80. Mn(2+) contacts are provided by histidine 113, histidine 115, glutamate 120, and histidine 162.

The protein belongs to the germin family. In terms of assembly, oligomer (believed to be a pentamer but probably hexamer).

The protein localises to the secreted. Its subcellular location is the extracellular space. It is found in the apoplast. Functionally, may play a role in plant defense. Probably has no oxalate oxidase activity even if the active site is conserved. In Arabidopsis thaliana (Mouse-ear cress), this protein is Germin-like protein subfamily 1 member 6.